We begin with the raw amino-acid sequence, 390 residues long: Tuftelin (390 aa).

Coiled-coil stretches lie at residues 88–126 (DKMIHEKNINQLKSEVQYIQEARNCLQKLREDISSKLDR) and 162–351 (DTCI…IEKQ). Residues 358–390 (STQARAKTENPGSIRISKPPSPKPMPVIRVVET) form a disordered region.

Belongs to the tuftelin family. Interacts with TFIP11. In terms of tissue distribution, expressed in the epidermis (at protein level). Present in the extracellular enamel and is mainly associated with the crystal component.

It localises to the secreted. Its function is as follows. Involved in the structural organization of the epidermis. Involved in the mineralization and structural organization of enamel. The protein is Tuftelin (TUFT1) of Homo sapiens (Human).